Here is a 126-residue protein sequence, read N- to C-terminus: Large ribosomal subunit protein uL14 (126 aa).

It belongs to the universal ribosomal protein uL14 family. As to quaternary structure, part of the 50S ribosomal subunit. Forms a cluster with proteins L3 and L19. In the 70S ribosome, L14 and L19 interact and together make contacts with the 16S rRNA in bridges B5 and B8.

In terms of biological role, binds to 23S rRNA. Forms part of two intersubunit bridges in the 70S ribosome. The protein is Large ribosomal subunit protein uL14 of Persephonella marina (strain DSM 14350 / EX-H1).